The chain runs to 835 residues: MGILNKIFGTYSERELRRVNPIVNKIEALDEKMQSLKDEDFKLKTEEFKSRLEKGEKLDDILPEAFALVREAAHRTIGLKHYREQLIGGVVLHQGRIGEMKTGEGKTLVATLPAYVNALTGKGVHIVTVNDYLAKRDRDLMAPVYEFLGLKVGVILHNLNNEERQEAYGSDITYGTNSEFGFDYLRDNMVVYKEERVQRKLNFSIVDEVDSILIDEARTPLIISGQGEKSTEFYKVADYFTKSLIAEKDFTIDEKANSAMLTDEGVNKAENFFKVDNYADAENMEIQHHVVQALKANYVMKKDKDYMIKDGEILIVDEFTGRAMEGRRYSDGLHQAIEAKEGVRVERESKTLATITYQNYFRMYNKLSGMTGTAQTEENEFREIYGLDVIVIPTHEPIARIDNADVVYKSEKGKFKAIVDEIVERYKKGQPMLVGTVSIEKSEMLSSMLKKKGVPHQVLNAKYHEKEAEIISHAGEYGMVTIATNMAGRGTDIKLTKEAEEAGGLMIIGTERHESRRIDNQLRGRSGRQGDPGESRFFVSLEDDLMRIFGSERIQGIVDKLGLAEDEAIESKMVSSAIESAQKKVEGNNFDIRKTLLQYDDVINKQREIIYKQRSEVLEGEDLKDQIRDMIRDVVYTAVNSHISGVEEEFQTELQNLVNYLEDICLPKALVKVKDISNLSDEEIKEKLLEAVENIYIRKEKEIGEEQIREIERVILLRVVDTKWMDHIDDMDHLKQGIGLRAYRQQDPVQAYQFEGSEMFEEMIYNIKVDTVRYLFHVEVEKAPEREKVAKETSTNYDEDSVKKQPIKKENRIGRNDMCPCGSGKKYKNCCGRMA.

ATP-binding positions include Gln-85, 103-107, and Asp-492; that span reads GEGKT. Cys-819, Cys-821, Cys-830, and Cys-831 together coordinate Zn(2+).

It belongs to the SecA family. As to quaternary structure, monomer and homodimer. Part of the essential Sec protein translocation apparatus which comprises SecA, SecYEG and auxiliary proteins SecDF. Other proteins may also be involved. Requires Zn(2+) as cofactor.

The protein resides in the cell membrane. The protein localises to the cytoplasm. It carries out the reaction ATP + H2O + cellular proteinSide 1 = ADP + phosphate + cellular proteinSide 2.. Part of the Sec protein translocase complex. Interacts with the SecYEG preprotein conducting channel. Has a central role in coupling the hydrolysis of ATP to the transfer of proteins into and across the cell membrane, serving as an ATP-driven molecular motor driving the stepwise translocation of polypeptide chains across the membrane. The polypeptide is Protein translocase subunit SecA (Clostridium botulinum (strain ATCC 19397 / Type A)).